Reading from the N-terminus, the 299-residue chain is GTPase Era (299 aa).

Residues 5-172 form the Era-type G domain; that stretch reads KSGFVSIIGR…IDVLKTYLPE (168 aa). Residues 13–20 form a G1 region; that stretch reads GRPNVGKS. 13–20 contacts GTP; that stretch reads GRPNVGKS. The G2 stretch occupies residues 39–43; it reads QTTRN. The G3 stretch occupies residues 60 to 63; the sequence is DTPG. Residues 60-64 and 122-125 each bind GTP; these read DTPGI and NKID. The tract at residues 122-125 is G4; sequence NKID. The segment at 151 to 153 is G5; that stretch reads ISA. Residues 203-280 enclose the KH type-2 domain; the sequence is TSEEIPHAIG…YLELWVKVQR (78 aa).

It belongs to the TRAFAC class TrmE-Era-EngA-EngB-Septin-like GTPase superfamily. Era GTPase family. Monomer.

It is found in the cytoplasm. It localises to the cell membrane. In terms of biological role, an essential GTPase that binds both GDP and GTP, with rapid nucleotide exchange. Plays a role in 16S rRNA processing and 30S ribosomal subunit biogenesis and possibly also in cell cycle regulation and energy metabolism. This is GTPase Era from Staphylococcus aureus (strain Mu3 / ATCC 700698).